We begin with the raw amino-acid sequence, 493 residues long: GPI alpha-1,6-mannosyltransferase 2 (493 aa).

The Cytoplasmic segment spans residues 1-13; it reads MWPQDPSRKEVLR. Residues 14–34 form a helical membrane-spanning segment; sequence FAVSCRILTLMLQALFNAIIP. The Lumenal portion of the chain corresponds to 35–77; that stretch reads DHHAEAFSPPRLAPSGFVDQLVEGLLGGLSHWDAEHFLFIAEH. Residues 78-98 traverse the membrane as a helical segment; that stretch reads GYLYEHNFAFFPGFPLALLVG. Topologically, residues 99-113 are cytoplasmic; sequence TELLRPLRGLLSLRS. A helical membrane pass occupies residues 114 to 134; the sequence is CLLISVASLNFLFFMLAAVAL. Topologically, residues 135–136 are lumenal; it reads HD. A helical membrane pass occupies residues 137-157; the sequence is LGCLVLHCPHQSFYAALLFCL. Residues 158–161 are Cytoplasmic-facing; the sequence is SPAN. The helical transmembrane segment at 162–182 threads the bilayer; it reads VFLAAGYSEALFALLTFSAMG. The Lumenal portion of the chain corresponds to 183–192; it reads QLERGRVWTS. Residues 193–213 form a helical membrane-spanning segment; sequence VLLFAFATGVRSNGLVSVGFL. Topologically, residues 214-234 are cytoplasmic; that stretch reads MHSQCQGFFSSLTMLNPLRQL. The helical transmembrane segment at 235–255 threads the bilayer; it reads FKLMASLFLSVFTLGLPFALF. The Lumenal segment spans residues 256–327; it reads QYYAYTQFCL…KYYELKQVPN (72 aa). The helical transmembrane segment at 328–348 threads the bilayer; sequence FLLAAPVAILVAWATWTYVTT. At 349–378 the chain is on the cytoplasmic side; the sequence is HPWLCLTLGLQRSKNNKTLEKPDLGFLSPQ. A helical transmembrane segment spans residues 379–399; sequence VFVYVVHAAVLLLFGGLCMHV. The Lumenal portion of the chain corresponds to 400–469; sequence QVLTRFLGSS…HWKTCSPVTR (70 aa). The chain crosses the membrane as a helical span at residues 470 to 490; it reads YILGYFLTYWLLGLLLHCNFL. The Cytoplasmic portion of the chain corresponds to 491 to 493; sequence PWT.

This sequence belongs to the PIGV family. Post-translationally, not N-glycosylated.

It localises to the endoplasmic reticulum membrane. It participates in glycolipid biosynthesis; glycosylphosphatidylinositol-anchor biosynthesis. Functionally, alpha-1,6-mannosyltransferase that catalyzes the transfer of the second mannose, via an alpha-1,6 bond, from a dolichol-phosphate-mannose (Dol-P-Man) to the alpha-D-Man-(1-&gt;4)-alpha-D-GlcN-(1-&gt;6)-(1-radyl,2-acyl-sn-glycero-3-phospho)-2-acyl-inositol (also termed H2) intermediate to generate an alpha-D-Man-(1-&gt;6)-alpha-D-Man-(1-&gt;4)-alpha-D-GlcN-(1-&gt;6)-(1-radyl,2-acyl-sn-glycero-3-phospho)-2-acyl-inositol (also termed H3) and participates in the seventh step of the glycosylphosphatidylinositol-anchor biosynthesis. Also transfers the second mannose on a 2-PEtn-alpha-D-Man-(1-&gt;4)-alpha-D-GlcN-(1-&gt;6)-(1-radyl,2-acyl-sn-glycero-3-phospho)-2-acyl-inositol (also termed H5). In Homo sapiens (Human), this protein is GPI alpha-1,6-mannosyltransferase 2.